The primary structure comprises 463 residues: A-type ATP synthase subunit B (463 aa).

It belongs to the ATPase alpha/beta chains family. Has multiple subunits with at least A(3), B(3), C, D, E, F, H, I and proteolipid K(x).

The protein resides in the cell membrane. Component of the A-type ATP synthase that produces ATP from ADP in the presence of a proton gradient across the membrane. The B chain is a regulatory subunit. In Aeropyrum pernix (strain ATCC 700893 / DSM 11879 / JCM 9820 / NBRC 100138 / K1), this protein is A-type ATP synthase subunit B.